The primary structure comprises 136 residues: Protein NrdI (136 aa).

The protein belongs to the NrdI family.

Its function is as follows. Probably involved in ribonucleotide reductase function. This is Protein NrdI from Escherichia coli O127:H6 (strain E2348/69 / EPEC).